A 170-amino-acid chain; its full sequence is Protein-lysine myristoyltransferase HlyC (170 aa).

Residue histidine 23 is part of the active site. Histidine 151 is a heme binding site.

The protein belongs to the RTX toxin acyltransferase family. As to quaternary structure, monomer. In terms of processing, proteolytically cleaved by the protease systems ClpAP, ClpXP and FtsH, leading to its degradation.

The protein localises to the cytoplasm. The enzyme catalyses tetradecanoyl-[ACP] + L-lysyl-[protein] = N(6)-tetradecanoyl-L-lysyl-[protein] + holo-[ACP] + H(+). The acyltransferase activity is inhibited by heme. Its function is as follows. Protein-lysine myristoyltransferase that catalyzes myristoylation of the protoxin (HlyA) at two internal lysine residues, thereby converting it to the active toxin. The chain is Protein-lysine myristoyltransferase HlyC from Escherichia coli.